We begin with the raw amino-acid sequence, 80 residues long: Metallothionein-like protein 1 (80 aa).

Belongs to the metallothionein superfamily. Type 15 family.

In terms of biological role, metallothioneins have a high content of cysteine residues that bind various heavy metals. In Coffea arabica (Arabian coffee), this protein is Metallothionein-like protein 1 (METAL1).